The following is a 354-amino-acid chain: Arginase-2, mitochondrial (354 aa).

Residues 1–22 (MFLRSSVSRLLHGQIPCALTRS) constitute a mitochondrion transit peptide. Mn(2+)-binding residues include histidine 120, aspartate 143, histidine 145, and aspartate 147. Residues 145–149 (HADIN), 156–158 (SGN), and glutamate 202 contribute to the substrate site. Residues aspartate 251 and aspartate 253 each contribute to the Mn(2+) site. Substrate contacts are provided by threonine 265 and glutamate 296.

Belongs to the arginase family. In terms of assembly, homotrimer. It depends on Mn(2+) as a cofactor.

It localises to the mitochondrion. It catalyses the reaction L-arginine + H2O = urea + L-ornithine. Its pathway is nitrogen metabolism; urea cycle; L-ornithine and urea from L-arginine: step 1/1. Functionally, may play a role in the regulation of extra-urea cycle arginine metabolism and also in down-regulation of nitric oxide synthesis. Extrahepatic arginase functions to regulate L-arginine bioavailability to nitric oxid synthase (NOS). Arginine metabolism is a critical regulator of innate and adaptive immune responses. Seems to be involved in negative regulation of the survival capacity of activated T cells. May suppress inflammation-related signaling in asthmatic airway epithelium. May play a role in promoting prenatal immune suppression. Regulates RPS6KB1 signaling, which promotes endothelial cell senescence and inflammation and implicates NOS3/eNOS dysfunction. Can inhibit endothelial autophagy independently of its enzymatic activity implicating mTORC2 signaling. Involved in vascular smooth muscle cell senescence and apoptosis independently of its enzymatic activity. The sequence is that of Arginase-2, mitochondrial (Arg2) from Rattus norvegicus (Rat).